Consider the following 302-residue polypeptide: Succinate--CoA ligase [ADP-forming] subunit alpha (302 aa).

Residues 17-20, Lys-43, and 96-98 each bind CoA; these read TGST and ITE. A substrate-binding site is contributed by Tyr-159. The active-site Tele-phosphohistidine intermediate is His-247.

The protein belongs to the succinate/malate CoA ligase alpha subunit family. As to quaternary structure, heterotetramer of two alpha and two beta subunits.

It catalyses the reaction succinate + ATP + CoA = succinyl-CoA + ADP + phosphate. The catalysed reaction is GTP + succinate + CoA = succinyl-CoA + GDP + phosphate. The protein operates within carbohydrate metabolism; tricarboxylic acid cycle; succinate from succinyl-CoA (ligase route): step 1/1. Functionally, succinyl-CoA synthetase functions in the citric acid cycle (TCA), coupling the hydrolysis of succinyl-CoA to the synthesis of either ATP or GTP and thus represents the only step of substrate-level phosphorylation in the TCA. The alpha subunit of the enzyme binds the substrates coenzyme A and phosphate, while succinate binding and nucleotide specificity is provided by the beta subunit. In Staphylococcus epidermidis (strain ATCC 35984 / DSM 28319 / BCRC 17069 / CCUG 31568 / BM 3577 / RP62A), this protein is Succinate--CoA ligase [ADP-forming] subunit alpha.